The sequence spans 147 residues: Large ribosomal subunit protein bL9 (147 aa).

Belongs to the bacterial ribosomal protein bL9 family.

Its function is as follows. Binds to the 23S rRNA. This is Large ribosomal subunit protein bL9 from Campylobacter lari (strain RM2100 / D67 / ATCC BAA-1060).